A 287-amino-acid polypeptide reads, in one-letter code: Polyamine aminopropyltransferase (287 aa).

The 234-residue stretch at 5 to 238 (ETWHETLHDH…GIMTFAWASQ (234 aa)) folds into the PABS domain. Gln33 lines the S-methyl-5'-thioadenosine pocket. Residues His64 and Asp88 each contribute to the spermidine site. Residues Glu108 and 140-141 (DG) contribute to the S-methyl-5'-thioadenosine site. The active-site Proton acceptor is Asp158. 158-161 (DCTD) lines the spermidine pocket. Pro165 contacts S-methyl-5'-thioadenosine.

Belongs to the spermidine/spermine synthase family. As to quaternary structure, homodimer or homotetramer.

The protein resides in the cytoplasm. The catalysed reaction is S-adenosyl 3-(methylsulfanyl)propylamine + putrescine = S-methyl-5'-thioadenosine + spermidine + H(+). The protein operates within amine and polyamine biosynthesis; spermidine biosynthesis; spermidine from putrescine: step 1/1. Its function is as follows. Catalyzes the irreversible transfer of a propylamine group from the amino donor S-adenosylmethioninamine (decarboxy-AdoMet) to putrescine (1,4-diaminobutane) to yield spermidine. The sequence is that of Polyamine aminopropyltransferase from Sodalis glossinidius (strain morsitans).